The chain runs to 338 residues: Anthranilate phosphoribosyltransferase (338 aa).

Residues Gly81, 84-85, Thr89, 91-94, 109-117, and Ala121 each bind 5-phospho-alpha-D-ribose 1-diphosphate; these read GD, NIST, and KHGNRALSS. Gly81 is a binding site for anthranilate. Ser93 is a Mg(2+) binding site. Asn112 lines the anthranilate pocket. Residue Arg167 participates in anthranilate binding. Residues Asp225 and Glu226 each contribute to the Mg(2+) site.

The protein belongs to the anthranilate phosphoribosyltransferase family. Homodimer. Requires Mg(2+) as cofactor.

It catalyses the reaction N-(5-phospho-beta-D-ribosyl)anthranilate + diphosphate = 5-phospho-alpha-D-ribose 1-diphosphate + anthranilate. It functions in the pathway amino-acid biosynthesis; L-tryptophan biosynthesis; L-tryptophan from chorismate: step 2/5. Functionally, catalyzes the transfer of the phosphoribosyl group of 5-phosphorylribose-1-pyrophosphate (PRPP) to anthranilate to yield N-(5'-phosphoribosyl)-anthranilate (PRA). In Rhizobium etli (strain CIAT 652), this protein is Anthranilate phosphoribosyltransferase.